The sequence spans 673 residues: Probable lysophospholipase 4 (673 aa).

An N-terminal signal peptide occupies residues 1–19; the sequence is MYVNYIGLFAFVQISLTLA. Asparagine 72, asparagine 125, asparagine 191, asparagine 194, asparagine 272, asparagine 301, asparagine 374, asparagine 404, asparagine 409, asparagine 481, asparagine 516, asparagine 545, and asparagine 574 each carry an N-linked (GlcNAc...) asparagine glycan. The PLA2c domain occupies 74-615; that stretch reads TCSNDNLLRP…QEYCWDGTLA (542 aa). The interval 631–653 is disordered; sequence TTSRAPSGTTSGTASSTTSSSVA.

It belongs to the lysophospholipase family.

The protein resides in the secreted. It carries out the reaction a 1-acyl-sn-glycero-3-phosphocholine + H2O = sn-glycerol 3-phosphocholine + a fatty acid + H(+). Functionally, catalyzes the release of fatty acids from lysophospholipids. In Schizosaccharomyces pombe (strain 972 / ATCC 24843) (Fission yeast), this protein is Probable lysophospholipase 4 (plb4).